Consider the following 118-residue polypeptide: Large ribosomal subunit protein bL20 (118 aa).

The protein belongs to the bacterial ribosomal protein bL20 family.

Its function is as follows. Binds directly to 23S ribosomal RNA and is necessary for the in vitro assembly process of the 50S ribosomal subunit. It is not involved in the protein synthesizing functions of that subunit. The sequence is that of Large ribosomal subunit protein bL20 from Hydrogenovibrio crunogenus (strain DSM 25203 / XCL-2) (Thiomicrospira crunogena).